The chain runs to 289 residues: G1/S-specific cyclin-D2 (289 aa).

In terms of domain architecture, Cyclin N-terminal spans 26–151 (LQNLLTIEER…VLGKLKWNLA (126 aa)). Residues 264–289 (QHNAGSKSVEDPDQATTPTDVRDVDL) are disordered. Ser-271 bears the Phosphoserine mark. Phosphothreonine is present on Thr-280.

Belongs to the cyclin family. Cyclin D subfamily. Interacts with either CDK4 or CDK6 protein kinase to form a serine/threonine kinase holoenzyme complex. The cyclin subunit imparts substrate specificity to the complex. In terms of processing, phosphorylation at Thr-280 by MAP kinases is required for ubiquitination and degradation by the DCX(AMBRA1) complex. Post-translationally, ubiquitinated by the DCX(AMBRA1) complex during the transition from G1 to S cell phase, leading to its degradation: ubiquitination is dependent on Thr-280 phosphorylation. The DCX(AMBRA1) complex represents the major regulator of CCND2 stability during the G1/S transition. Polyubiquitinated by the SCF(FBXL2) complex, leading to proteasomal degradation.

The protein localises to the nucleus. It localises to the cytoplasm. It is found in the nucleus membrane. In terms of biological role, regulatory component of the cyclin D2-CDK4 (DC) complex that phosphorylates and inhibits members of the retinoblastoma (RB) protein family including RB1 and regulates the cell-cycle during G(1)/S transition. Phosphorylation of RB1 allows dissociation of the transcription factor E2F from the RB/E2F complex and the subsequent transcription of E2F target genes which are responsible for the progression through the G(1) phase. Hypophosphorylates RB1 in early G(1) phase. Cyclin D-CDK4 complexes are major integrators of various mitogenenic and antimitogenic signals. The polypeptide is G1/S-specific cyclin-D2 (Mus musculus (Mouse)).